Consider the following 712-residue polypeptide: Polyribonucleotide nucleotidyltransferase (712 aa).

Mg(2+) is bound by residues D487 and D493. The region spanning 554–613 (PRIEVMNIPVDKIREVIGSGGKVIREIVEKTGAKINIEDDGTVKIASSSGKEIEAARKWI) is the KH domain. The S1 motif domain maps to 623-691 (GQVYEGTVVK…ERGKVRLSMK (69 aa)).

The protein belongs to the polyribonucleotide nucleotidyltransferase family. Mg(2+) serves as cofactor.

It localises to the cytoplasm. It catalyses the reaction RNA(n+1) + phosphate = RNA(n) + a ribonucleoside 5'-diphosphate. Functionally, involved in mRNA degradation. Catalyzes the phosphorolysis of single-stranded polyribonucleotides processively in the 3'- to 5'-direction. The chain is Polyribonucleotide nucleotidyltransferase from Rhizobium johnstonii (strain DSM 114642 / LMG 32736 / 3841) (Rhizobium leguminosarum bv. viciae).